The primary structure comprises 588 residues: MQHRQDNLLANRNLLPGMVSGQYAFRIRTLSQVVRYFSLLPCLCILSFSSPAAMLSPGDRSAIQQQQQQLLDENQRQRDALERSAPLTITPSPETSAGTEGPCFTVSRIVVSGATRLTSAETDRLVAPWVNQCLNITGLTAVTDAVTDGYIRRGYITSRAFLTEQDLSGGVLHITVMEGRLQQIRAEGADLPGRTLKMVFPGMEGKVLNLRDIEQGMEQINRLRTESVQIEISPGDREGWSVVTLTALPEWPVTGSVGIDNSGQKNTGTGQLNGVLSFNNPLGLADNWFVRGGRSSDFSVSHDARNFAAGVSLPYGYTLVDYTYSWSDYLSTIDNRGWLWRSTGDLQTHRLGLSHVLFRNGNMKTALTGGLQHRIIHNYLDDVLLQGSSRKLTSFSVGLNHTHKFLGGVGTLNPVFTRGMPWFGAESDHGKRGDLPVNQFRKWSVSASFQRPVTDRVWWLTSAYAQWSPDRLHGVEQLSLGGESSVRGFKEQYISGNNGGYLRNELSWSLFSLPYVGTVRAVTALDGGWLHSDRDDPYSSGTLWGAAAGLSTTSGHVSGSFTAGLPLVYPDWLAPDHLTVYWRVAVAF.

Residues 33 to 55 (VVRYFSLLPCLCILSFSSPAAML) traverse the membrane as a helical segment. One can recognise a POTRA domain in the interval 104 to 179 (FTVSRIVVSG…GVLHITVMEG (76 aa)).

It belongs to the TPS (TC 1.B.20) family.

The protein localises to the cell outer membrane. In terms of biological role, potential outer membrane protein component of a toxin-immunity protein module, which functions as a cellular contact-dependent growth inhibition (CDI) system. CDI modules allow bacteria to communicate with and inhibit the growth of closely related neighboring bacteria in a contact-dependent fashion. This protein may be required for secretion and assembly of the CdiA toxin protein. Probable member of a two partner secretion pathway (TPS) in which it mediates the secretion of CdiA. The polypeptide is Outer membrane transporter CdiB (Escherichia coli O6:K15:H31 (strain 536 / UPEC)).